Consider the following 66-residue polypeptide: Large ribosomal subunit protein bL35 (66 aa).

The segment covering 1–46 (MPKMKTHRASAKRFKRTGNGGLKRHHAFTGHRFHGKTKKQRRHLRK) has biased composition (basic residues). The tract at residues 1 to 50 (MPKMKTHRASAKRFKRTGNGGLKRHHAFTGHRFHGKTKKQRRHLRKAAMV) is disordered.

The protein belongs to the bacterial ribosomal protein bL35 family.

This Lactobacillus delbrueckii subsp. bulgaricus (strain ATCC 11842 / DSM 20081 / BCRC 10696 / JCM 1002 / NBRC 13953 / NCIMB 11778 / NCTC 12712 / WDCM 00102 / Lb 14) protein is Large ribosomal subunit protein bL35.